The following is a 273-amino-acid chain: NADPH-dependent 7-cyano-7-deazaguanine reductase (273 aa).

Residue 81–83 (VES) coordinates substrate. 83-84 (SK) is a binding site for NADPH. The Thioimide intermediate role is filled by Cys179. Asp186 serves as the catalytic Proton donor. 218–219 (AE) provides a ligand contact to substrate. 247–248 (RG) is an NADPH binding site.

This sequence belongs to the GTP cyclohydrolase I family. QueF type 2 subfamily. As to quaternary structure, homodimer.

The protein resides in the cytoplasm. It carries out the reaction 7-aminomethyl-7-carbaguanine + 2 NADP(+) = 7-cyano-7-deazaguanine + 2 NADPH + 3 H(+). Its pathway is tRNA modification; tRNA-queuosine biosynthesis. Catalyzes the NADPH-dependent reduction of 7-cyano-7-deazaguanine (preQ0) to 7-aminomethyl-7-deazaguanine (preQ1). In Rickettsia prowazekii (strain Madrid E), this protein is NADPH-dependent 7-cyano-7-deazaguanine reductase.